Reading from the N-terminus, the 300-residue chain is N-carbamoylputrescine amidase (300 aa).

Residues 8-266 (VTVAALQFAC…EAVLVAQFDL (259 aa)) form the CN hydrolase domain. Glu-47 serves as the catalytic Proton acceptor. Lys-120 functions as the Proton donor in the catalytic mechanism. Cys-157 serves as the catalytic Nucleophile.

The protein belongs to the carbon-nitrogen hydrolase superfamily. Homooctamer.

The enzyme catalyses N-carbamoylputrescine + H2O + 2 H(+) = putrescine + NH4(+) + CO2. The protein operates within amine and polyamine biosynthesis; putrescine biosynthesis via agmatine pathway; putrescine from N-carbamoylputrescine (amidase route): step 1/1. Functionally, involved in polyamine biosynthesis. The polypeptide is N-carbamoylputrescine amidase (CPA) (Solanum tuberosum (Potato)).